A 1070-amino-acid polypeptide reads, in one-letter code: DNA-directed RNA polymerase subunit beta (1070 aa).

This sequence belongs to the RNA polymerase beta chain family. In plastids the minimal PEP RNA polymerase catalytic core is composed of four subunits: alpha, beta, beta', and beta''. When a (nuclear-encoded) sigma factor is associated with the core the holoenzyme is formed, which can initiate transcription.

It is found in the plastid. The protein resides in the chloroplast. The enzyme catalyses RNA(n) + a ribonucleoside 5'-triphosphate = RNA(n+1) + diphosphate. In terms of biological role, DNA-dependent RNA polymerase catalyzes the transcription of DNA into RNA using the four ribonucleoside triphosphates as substrates. This Citrus sinensis (Sweet orange) protein is DNA-directed RNA polymerase subunit beta.